We begin with the raw amino-acid sequence, 283 residues long: Circadian clock oscillator protein KaiA (283 aa).

Residues 3–133 (QSTALTICGL…VKLCPGCAVP (131 aa)) are psR domain, binds oxidized quinones. The KaiA N-terminal domain maps to 3-163 (QSTALTICGL…RLSQKLKERL (161 aa)). The interval 164–172 (GYLGVYYKR) is flexible linker. The KaiA C-terminal domain occupies 173–281 (DTAFFFRRMS…CEMYRRSIPR (109 aa)).

Homodimer. The KaiABC complex composition changes during the circadian cycle to control KaiC phosphorylation. Complexes KaiC(6), KaiA(2-4):KaiC(6), KaiB(6):KaiC(6) and KaiC(6):KaiB(6):KaiA(12) are among the most important forms, many form cooperatively. KaiA and CikA bind to the same region of the KaiB(fs) form and therefore compete.

Functionally, key component of the KaiABC oscillator complex, which constitutes the main circadian regulator in cyanobacteria. Complex composition changes during the circadian cycle to control KaiC phosphorylation. KaiA stimulates KaiC autophosphorylation, while KaiB sequesters KaiA, leading to KaiC autodephosphorylation. KaiA binding to the KaiC CII domain during the subjective day yields KaiA(2-4):KaiC(6) complexes which stimulate KaiC autophosphorylation. Phospho-Ser-431 KaiC accumulation triggers binding of KaiB during the subjective night to form the KaiB(6):KaiC(6) complex, leading to changes in the output regulators CikA and SasA. KaiB(6):KaiC(6) formation exposes a site for KaiA binding on KaiB that sequesters KaiA from KaiC's CII domain, making the KaiC(6):KaiB(6):KaiA(12) complex resulting in KaiC autodephosphorylation. Complete dephosphorylation of KaiC leads to dissociation of KaiA(2):KaiB(1), completing 1 cycle of the Kai oscillator. Its function is as follows. Binds oxidized quinones via the N-terminal PsR domain, allowing it to sense redox changes and possibly mediate clock input. This Thermostichus vulcanus (Synechococcus vulcanus) protein is Circadian clock oscillator protein KaiA.